The following is a 352-amino-acid chain: 3-isopropylmalate dehydrogenase (352 aa).

Positions 91, 101, 129, and 218 each coordinate substrate. Mg(2+)-binding residues include D218, D242, and D246. Residue 281-293 (GSAPDIAGKGLAN) coordinates NAD(+).

It belongs to the isocitrate and isopropylmalate dehydrogenases family. LeuB type 1 subfamily. Homodimer. Mg(2+) serves as cofactor. The cofactor is Mn(2+).

The protein resides in the cytoplasm. It carries out the reaction (2R,3S)-3-isopropylmalate + NAD(+) = 4-methyl-2-oxopentanoate + CO2 + NADH. The protein operates within amino-acid biosynthesis; L-leucine biosynthesis; L-leucine from 3-methyl-2-oxobutanoate: step 3/4. Catalyzes the oxidation of 3-carboxy-2-hydroxy-4-methylpentanoate (3-isopropylmalate) to 3-carboxy-4-methyl-2-oxopentanoate. The product decarboxylates to 4-methyl-2 oxopentanoate. This Novosphingobium aromaticivorans (strain ATCC 700278 / DSM 12444 / CCUG 56034 / CIP 105152 / NBRC 16084 / F199) protein is 3-isopropylmalate dehydrogenase.